A 384-amino-acid chain; its full sequence is PqqA peptide cyclase (384 aa).

Residues 5–220 (VGLPLWLLAE…TNEYREKLKA (216 aa)) form the Radical SAM core domain. Cys19, Cys23, and Cys26 together coordinate [4Fe-4S] cluster.

This sequence belongs to the radical SAM superfamily. PqqE family. As to quaternary structure, interacts with PqqD. The interaction is necessary for activity of PqqE. Requires [4Fe-4S] cluster as cofactor.

It carries out the reaction [PQQ precursor protein] + S-adenosyl-L-methionine = E-Y cross-linked-[PQQ precursor protein] + 5'-deoxyadenosine + L-methionine + H(+). The protein operates within cofactor biosynthesis; pyrroloquinoline quinone biosynthesis. Catalyzes the cross-linking of a glutamate residue and a tyrosine residue in the PqqA protein as part of the biosynthesis of pyrroloquinoline quinone (PQQ). This chain is PqqA peptide cyclase, found in Acinetobacter baumannii (strain SDF).